The following is an 803-amino-acid chain: Leucine--tRNA ligase (803 aa).

A 'HIGH' region motif is present at residues 40-51 (PYPSGAGLHVGH). A 'KMSKS' region motif is present at residues 575-579 (KMSKS). An ATP-binding site is contributed by Lys-578.

This sequence belongs to the class-I aminoacyl-tRNA synthetase family.

It localises to the cytoplasm. It carries out the reaction tRNA(Leu) + L-leucine + ATP = L-leucyl-tRNA(Leu) + AMP + diphosphate. The chain is Leucine--tRNA ligase from Listeria monocytogenes serotype 4b (strain F2365).